A 333-amino-acid chain; its full sequence is Ornithine carbamoyltransferase (333 aa).

Carbamoyl phosphate is bound by residues 56–59 (STRT), glutamine 83, arginine 107, and 134–137 (HPTQ). L-ornithine is bound by residues asparagine 167, aspartate 231, and 235–236 (SM). Residues 273–274 (CL) and arginine 318 contribute to the carbamoyl phosphate site.

Belongs to the aspartate/ornithine carbamoyltransferase superfamily. OTCase family.

The protein localises to the cytoplasm. It catalyses the reaction carbamoyl phosphate + L-ornithine = L-citrulline + phosphate + H(+). The protein operates within amino-acid biosynthesis; L-arginine biosynthesis; L-arginine from L-ornithine and carbamoyl phosphate: step 1/3. In terms of biological role, has vitronectin and fibronectin-binding activity. Its function is as follows. Reversibly catalyzes the transfer of the carbamoyl group from carbamoyl phosphate (CP) to the N(epsilon) atom of ornithine (ORN) to produce L-citrulline. The chain is Ornithine carbamoyltransferase (argF) from Staphylococcus epidermidis (strain ATCC 12228 / FDA PCI 1200).